We begin with the raw amino-acid sequence, 102 residues long: Protein YcgL (102 aa).

The YcgL domain maps to 14–98 (MFCVIYRSSK…PPEDLLKQHL (85 aa)).

The polypeptide is Protein YcgL (Salmonella agona (strain SL483)).